The sequence spans 238 residues: Ribonuclease-like storage protein (238 aa).

Positions methionine 1–alanine 23 are cleaved as a signal peptide. Residue glutamine 37 participates in RNA binding. Cysteine 43 and cysteine 49 are disulfide-bonded. Residues histidine 61, phenylalanine 109, histidine 112–glutamate 113, and lysine 116–histidine 117 each bind RNA. Histidine 61 acts as the Proton donor in catalysis. Disulfide bonds link cysteine 76-cysteine 120 and cysteine 196-cysteine 207. Residue glutamate 113 is part of the active site. Catalysis depends on histidine 117, which acts as the Proton acceptor.

This sequence belongs to the RNase T2 family. Homodimer. Root.

Its function is as follows. May act as a storage protein providing a nitrogen source. Seems to have no RNase activity although it has conserved the active site residues. The chain is Ribonuclease-like storage protein from Panax ginseng (Korean ginseng).